The following is a 90-amino-acid chain: Probable Fe(2+)-trafficking protein (90 aa).

Belongs to the Fe(2+)-trafficking protein family.

Its function is as follows. Could be a mediator in iron transactions between iron acquisition and iron-requiring processes, such as synthesis and/or repair of Fe-S clusters in biosynthetic enzymes. The polypeptide is Probable Fe(2+)-trafficking protein (Aliivibrio fischeri (strain ATCC 700601 / ES114) (Vibrio fischeri)).